Reading from the N-terminus, the 1170-residue chain is WD repeat-containing protein 35 (1170 aa).

WD repeat units follow at residues 12–51, 69–108, 113–152, 154–193, and 491–528; these read PNNVKLKCISWNKDQGFIACGGEDGLLKVLRLETQTDDSK, GHSGAVQVVTWNEQYQKLTTSDQNGLIIVWMLYKGSWYEE, RNKSVVRSMSWNADGQKICIVYEDGAVIVGSVDGNRIWGK, LKGIQLCHVTWSADSKILLFGMANGEIHIYDNQGNFIMKM, and GTRDPICAITASDKTLIVGRESGVIQRYSFPNVALIQK.

As to quaternary structure, component of the IFT complex A (IFT-A) complex. IFT-A complex is divided into a core subcomplex composed of IFT122:IFT140:WDR19 which is associated with TULP3 and a peripheral subcomplex composed of IFT43:WDR35:TTC21B. Interacts directy with IFT122, ITF43 and TTC21B. Interacts with IFT43. Interacts with CFAP61. Expressed at high levels in testis and at lower levels in the brain (at protein level). Also present in other tissues, including heart, uterus, spinal cord, ovary, liver, kidney, lung, pancreas and stomach.

The protein localises to the cytoplasm. Its subcellular location is the cytoskeleton. The protein resides in the microtubule organizing center. It is found in the centrosome. It localises to the cilium axoneme. The protein localises to the cilium basal body. As a component of the IFT complex A (IFT-A), a complex required for retrograde ciliary transport and entry into cilia of G protein-coupled receptors (GPCRs), it is involved in ciliogenesis and ciliary protein trafficking. May promote CASP3 activation and TNF-stimulated apoptosis. The sequence is that of WD repeat-containing protein 35 (Wdr35) from Rattus norvegicus (Rat).